Consider the following 129-residue polypeptide: RutC family protein PM1466 (129 aa).

Belongs to the RutC family.

The sequence is that of RutC family protein PM1466 from Pasteurella multocida (strain Pm70).